A 713-amino-acid chain; its full sequence is Major surface-labeled trophozoite antigen 417 (713 aa).

Positions 1-17 (MFGRFLLAIVILQLART) are cleaved as a signal peptide. Topologically, residues 18 to 679 (ACTQEADDGK…KDSGSTNKSG (662 aa)) are extracellular. Residues Asn-289 and Asn-676 are each glycosylated (N-linked (GlcNAc...) asparagine). Residues 680 to 708 (LSTGAIAGISVAVIVVVGGLIGFLCWWFL) traverse the membrane as a helical segment. Residues 709–713 (CRGKA) are Cytoplasmic-facing.

This sequence belongs to the Giardia variant surface protein family.

It is found in the cell membrane. The sequence is that of Major surface-labeled trophozoite antigen 417 (TSA 417) from Giardia intestinalis (Giardia lamblia).